Here is a 103-residue protein sequence, read N- to C-terminus: Putative membrane protein insertion efficiency factor (103 aa).

The protein belongs to the UPF0161 family.

The protein resides in the cell inner membrane. In terms of biological role, could be involved in insertion of integral membrane proteins into the membrane. This chain is Putative membrane protein insertion efficiency factor, found in Chlamydia caviae (strain ATCC VR-813 / DSM 19441 / 03DC25 / GPIC) (Chlamydophila caviae).